A 324-amino-acid polypeptide reads, in one-letter code: Cyclin-dependent kinase 1 (324 aa).

Residues 4-307 (YQKIEKIGEG…AKQACMHPYF (304 aa)) form the Protein kinase domain. ATP contacts are provided by residues 10-18 (IGEGTYGVV) and Lys34. Residue Thr14 is modified to Phosphothreonine. A Phosphotyrosine modification is found at Tyr15. The Proton acceptor role is filled by Asp148. Thr181 is modified (phosphothreonine; by CAK).

This sequence belongs to the protein kinase superfamily. CMGC Ser/Thr protein kinase family. CDC2/CDKX subfamily. Forms a stable but non-covalent complex with a regulatory subunit (SUC1) and with a cyclin.

The enzyme catalyses L-seryl-[protein] + ATP = O-phospho-L-seryl-[protein] + ADP + H(+). It carries out the reaction L-threonyl-[protein] + ATP = O-phospho-L-threonyl-[protein] + ADP + H(+). Phosphorylation at Thr-14 or Tyr-15 inactivates the enzyme, while phosphorylation at Thr-181 activates it. Functionally, cyclin-dependent kinase that acts as a master regulator of the mitotic and meiotic cell cycles. This is Cyclin-dependent kinase 1 from Ajellomyces capsulatus (Darling's disease fungus).